Here is a 60-residue protein sequence, read N- to C-terminus: Large ribosomal subunit protein uL30 (60 aa).

Belongs to the universal ribosomal protein uL30 family. In terms of assembly, part of the 50S ribosomal subunit.

This chain is Large ribosomal subunit protein uL30, found in Salinispora tropica (strain ATCC BAA-916 / DSM 44818 / JCM 13857 / NBRC 105044 / CNB-440).